A 200-amino-acid polypeptide reads, in one-letter code: Troponin I-like protein (200 aa).

Disordered regions lie at residues 1–20 (MGDE…AEVR) and 181–200 (ENKA…ENEE). Residues 2 to 116 (GDEEKRKMEE…EDAKYDLEYE (115 aa)) are a coiled coil.

This sequence belongs to the troponin I family. As to expression, expressed in salivary gland, gut, muscle and cuticle (at protein level).

Functionally, inhibits endothelial cell proliferation and angiogenesis in a vertebrate host. Probably required for efficient blood feeding on vertebrate hosts. The polypeptide is Troponin I-like protein (Haemaphysalis longicornis (Bush tick)).